Consider the following 199-residue polypeptide: Superoxide dismutase [Mn/Fe] (199 aa).

Positions 27, 81, 161, and 165 each coordinate Fe(3+). Mn(2+) is bound by residues His-27, His-81, Asp-161, and His-165.

The protein belongs to the iron/manganese superoxide dismutase family. In terms of assembly, homodimer. Mn(2+) is required as a cofactor. Fe(3+) serves as cofactor.

It catalyses the reaction 2 superoxide + 2 H(+) = H2O2 + O2. Its function is as follows. Destroys superoxide anion radicals which are normally produced within the cells and which are toxic to biological systems. Catalyzes the dismutation of superoxide anion radicals into O2 and H2O2 by successive reduction and oxidation of the transition metal ion at the active site. This chain is Superoxide dismutase [Mn/Fe] (sodA), found in Staphylococcus haemolyticus (strain JCSC1435).